We begin with the raw amino-acid sequence, 532 residues long: Calnexin homolog 2 (532 aa).

Positions 1–25 (MRERIITFVSLLLVALLSFPSVSYC) are cleaved as a signal peptide. Topologically, residues 26-468 (DDQTILYESF…EKAETQPNLT (443 aa)) are lumenal. Ca(2+) is bound by residues Ser-34 and Asp-65. An intrachain disulfide couples Cys-110 to Cys-145. Positions 114, 116, 136, and 143 each coordinate an alpha-D-glucoside. Residues 208 to 302 (NLLSAEDFEP…DEEDGEWEAP (95 aa)) form a disordered region. The p domain (Extended arm) stretch occupies residues 225–358 (IPDPEDKKPE…RDIPNPDYFE (134 aa)). Basic and acidic residues predominate over residues 226–242 (PDPEDKKPEDWDERAKI). 5 consecutive repeat copies span residues 227–238 (DPEDKKPEDWDE), 244–255 (DPNAVKPDDWDE), 263–274 (DEEAEKPEGWLD), 282–293 (DPEASKPEDWDD), and 297–307 (GEWEAPKVSNT). 4 X approximate repeats stretches follow at residues 227-293 (DPED…DWDD) and 297-354 (GEWE…IPNP). 2 stretches are compositionally biased toward acidic residues: residues 252-283 (DWDEDAPMEIEDEEAEKPEGWLDDEPVEVEDP) and 290-299 (DWDDEEDGEW). Cys-309 and Cys-315 are oxidised to a cystine. 3 repeat units span residues 316–326 (GEWKRPMKRNP), 330–340 (GKWSSPLIDNP), and 344–354 (GIWKPRDIPNP). An alpha-D-glucoside is bound at residue Glu-373. Asp-384 contacts Ca(2+). Residue Asn-466 is glycosylated (N-linked (GlcNAc...) asparagine). Residues 469–489 (IGVLISIVIVFLSLFFKLIFG) form a helical membrane-spanning segment. Residues 490–532 (GAKAKVEKKKPETAAETSTSEAKTEEKAEAVAAPRKRQTRRES) are Cytoplasmic-facing. A disordered region spans residues 493 to 532 (AKVEKKKPETAAETSTSEAKTEEKAEAVAAPRKRQTRRES). Residues 523–532 (PRKRQTRRES) are compositionally biased toward basic residues.

It belongs to the calreticulin family.

It is found in the endoplasmic reticulum membrane. Calcium-binding protein that interacts with newly synthesized monoglucosylated glycoproteins in the endoplasmic reticulum. It may act in assisting protein assembly and/or in the retention within the ER of unassembled protein subunits. It seems to play a major role in the quality control apparatus of the ER by the retention of incorrectly folded proteins. The polypeptide is Calnexin homolog 2 (Arabidopsis thaliana (Mouse-ear cress)).